An 819-amino-acid chain; its full sequence is Glycine-rich domain-containing protein 1 (819 aa).

Plays a regulatory role in abscisic acid (ABA) signaling and tolerance to abiotic stress during germination. May be involved in the regulation of the ABI transcriptional factors. This is Glycine-rich domain-containing protein 1 from Arabidopsis thaliana (Mouse-ear cress).